A 354-amino-acid polypeptide reads, in one-letter code: UDP-N-acetylglucosamine--N-acetylmuramyl-(pentapeptide) pyrophosphoryl-undecaprenol N-acetylglucosamine transferase (354 aa).

UDP-N-acetyl-alpha-D-glucosamine is bound by residues 11-13 (TAG), R164, S194, and Q289.

This sequence belongs to the glycosyltransferase 28 family. MurG subfamily.

It localises to the cell membrane. The enzyme catalyses di-trans,octa-cis-undecaprenyl diphospho-N-acetyl-alpha-D-muramoyl-L-alanyl-D-glutamyl-meso-2,6-diaminopimeloyl-D-alanyl-D-alanine + UDP-N-acetyl-alpha-D-glucosamine = di-trans,octa-cis-undecaprenyl diphospho-[N-acetyl-alpha-D-glucosaminyl-(1-&gt;4)]-N-acetyl-alpha-D-muramoyl-L-alanyl-D-glutamyl-meso-2,6-diaminopimeloyl-D-alanyl-D-alanine + UDP + H(+). It functions in the pathway cell wall biogenesis; peptidoglycan biosynthesis. Cell wall formation. Catalyzes the transfer of a GlcNAc subunit on undecaprenyl-pyrophosphoryl-MurNAc-pentapeptide (lipid intermediate I) to form undecaprenyl-pyrophosphoryl-MurNAc-(pentapeptide)GlcNAc (lipid intermediate II). This Clostridium botulinum (strain ATCC 19397 / Type A) protein is UDP-N-acetylglucosamine--N-acetylmuramyl-(pentapeptide) pyrophosphoryl-undecaprenol N-acetylglucosamine transferase.